A 549-amino-acid chain; its full sequence is Plant intracellular Ras-group-related LRR protein 4 (549 aa).

Positions 119 to 140 (SPSSNGSVSSRPPLPPATTTAA) are enriched in low complexity. The tract at residues 119–167 (SPSSNGSVSSRPPLPPATTTAARSDSQSSLNFSERAPVRPKDMVSRDDS) is disordered. The segment covering 141–150 (RSDSQSSLNF) has biased composition (polar residues). Residues 154-167 (APVRPKDMVSRDDS) are compositionally biased toward basic and acidic residues. A Phosphoserine modification is found at Ser-167. 11 LRR repeats span residues 245–268 (LSSLTSLDLSENHIVVLPNTIGGL), 269–291 (SSLTKLDLHSNRIGQLPESIGEL), 293–313 (NLVYLNLGSNQLSSLPSAFSR), 314–337 (LVRLEELDLSCNNLPILPESIGSL), 339–360 (SLKKLDVETNDIEEIPYSIGGC), 362–383 (SLIELRADYNKLKALPEAIGKI), 384–406 (TTLEILSVRYNNIRQLPTTMSSL), 407–430 (ASLKELDVSFNELESVPESLCFAT), 432–454 (LVKLNIGNNFADMVSLPRSIGNL), 455–476 (EMLEELDISNNQIRVLPDSFKM), and 478–500 (TKLRVFRAQENPLHIPPRDIAEK). A GVYW; degenerate motif is present at residues 501-508 (GPQAVVQY).

It belongs to the SHOC2 family. Widely expressed.

In terms of biological role, leucine-rich repeat protein that likely mediates protein interactions, possibly in the context of signal transduction. This is Plant intracellular Ras-group-related LRR protein 4 (PIRL4) from Arabidopsis thaliana (Mouse-ear cress).